Here is a 584-residue protein sequence, read N- to C-terminus: Methionine--tRNA ligase (584 aa).

The 'HIGH' region motif lies at 12–22 (PYANGDLHLGH). Residues Cys144, Cys147, Cys157, and Cys160 each contribute to the Zn(2+) site. A 'KMSKS' region motif is present at residues 334-338 (QFSTS). Thr337 is a binding site for ATP. The tract at residues 541–563 (EGRDRWAPSELEAGRPLPPPQPL) is disordered.

It belongs to the class-I aminoacyl-tRNA synthetase family. MetG type 1 subfamily. As to quaternary structure, monomer. Zn(2+) serves as cofactor.

Its subcellular location is the cytoplasm. It catalyses the reaction tRNA(Met) + L-methionine + ATP = L-methionyl-tRNA(Met) + AMP + diphosphate. Functionally, is required not only for elongation of protein synthesis but also for the initiation of all mRNA translation through initiator tRNA(fMet) aminoacylation. This is Methionine--tRNA ligase from Thermomicrobium roseum (strain ATCC 27502 / DSM 5159 / P-2).